A 1143-amino-acid polypeptide reads, in one-letter code: Serine/threonine-protein kinase BRI1-like 2 (1143 aa).

The N-terminal stretch at 1–31 (MTTSPIRVRIRTRIQISFIFLLTHLSQSSSS) is a signal peptide. Residues 32–756 (DQSSLKTDSL…GTRAASWANS (725 aa)) lie on the Extracellular side of the membrane. A Cys pair 1 motif is present at residues 68 to 75 (CQFSGVTC). 24 LRR repeats span residues 77–101 (GGRVTEINLSGSGLSGIVSFNAFTS), 102–125 (LDSLSVLKLSENFFVLNSTSLLLL), 126–150 (PLTLTHLELSSSGLIGTLPENFFSK), 151–175 (YSNLISITLSYNNFTGKLPNDLFLS), 177–200 (KKLQTLDLSYNNITGPISGLTIPL), 203–227 (CVSMTYLDFSGNSISGYISDSLINC), 228–250 (TNLKSLNLSYNNFDGQIPKSFGE), 251–275 (LKLLQSLDLSHNRLTGWIPPEIGDT), 277–299 (RSLQNLRLSYNNFTGVIPESLSS), 300–324 (CSWLQSLDLSNNNISGPFPNTILRS), 326–349 (GSLQILLLSNNLISGDFPTSISAC), 351–373 (SLRIADFSSNRFSGVIPPDLCPG), 374–398 (AASLEELRLPDNLVTGEIPPAISQC), 399–422 (SELRTIDLSLNYLNGTIPPEIGNL), 424–446 (KLEQFIAWYNNIAGEIPPEIGKL), 447–470 (QNLKDLILNNNQLTGEIPPEFFNC), 472–493 (NIEWVSFTSNRLTGEVPKDFGI), 494–518 (LSRLAVLQLGNNNFTGEIPPELGKC), 520–542 (TLVWLDLNTNHLTGEIPPRLGRQ), 570–594 (VGGLVEFSGIRPERLLQIPSLKSCD), 610–634 (YQTIEYLDLSYNQLRGKIPDEIGEM), 635–660 (IALQVLELSHNQLSGEIPFTIGQLKN), 662–681 (GVFDASDNRLQGQIPESFSN), and 682–707 (LSFLVQIDLSNNELTGPIPQRGQLST). 2 N-linked (GlcNAc...) asparagine glycosylation sites follow: Asn-84 and Asn-118. N-linked (GlcNAc...) asparagine glycosylation is found at Asn-163, Asn-188, Asn-226, and Asn-234. N-linked (GlcNAc...) asparagine glycans are attached at residues Asn-288 and Asn-312. Asn-412 carries an N-linked (GlcNAc...) asparagine glycan. Asn-469 carries N-linked (GlcNAc...) asparagine glycosylation. N-linked (GlcNAc...) asparagine glycosylation occurs at Asn-506. Residue Asn-681 is glycosylated (N-linked (GlcNAc...) asparagine). The Cys pair 2 motif lies at 720–727 (CGVPLPEC). A helical transmembrane segment spans residues 757-777 (IVLGVLISAASVCILIVWAIA). Residues 778–1143 (VRARRRDADD…NNSHSHSNSL (366 aa)) are Cytoplasmic-facing. Thr-835 carries the post-translational modification Phosphothreonine. Positions 838–1129 (FSAASMIGHG…LQVVASLREL (292 aa)) constitute a Protein kinase domain. ATP is bound by residues 844–852 (IGHGGFGEV) and Lys-866. Position 911 is a phosphotyrosine (Tyr-911). Catalysis depends on Asp-966, which acts as the Proton acceptor. Position 1001 is a phosphoserine (Ser-1001). Tyr-1009 bears the Phosphotyrosine mark.

This sequence belongs to the protein kinase superfamily. Ser/Thr protein kinase family. As to quaternary structure, interacts with TTL3. As to expression, expressed in provascular and procambial sites throughout plant development. Expressed throughout globe- to heart-staged embryos. Then, it is restricted to procambial cells by the late torpedo stage, and this pattern persists throughout the duration of embryo development. After germination, it is expressed not only in procambial cells throughout the plant but also in all lateral organ primordia before the onset of vascularization.

Its subcellular location is the cell membrane. It catalyses the reaction L-seryl-[protein] + ATP = O-phospho-L-seryl-[protein] + ADP + H(+). The catalysed reaction is L-threonyl-[protein] + ATP = O-phospho-L-threonyl-[protein] + ADP + H(+). Functionally, receptor with a serine/threonine-protein kinase activity, which may transduce extracellular spatial and temporal signals into downstream cell differentiation responses in provascular and procambial cells. In contrast to BRI1, BRL1 and BRL3, it does not bind brassinolide. This chain is Serine/threonine-protein kinase BRI1-like 2, found in Arabidopsis thaliana (Mouse-ear cress).